A 616-amino-acid chain; its full sequence is Chaperone protein HscA (616 aa).

It belongs to the heat shock protein 70 family.

Functionally, chaperone involved in the maturation of iron-sulfur cluster-containing proteins. Has a low intrinsic ATPase activity which is markedly stimulated by HscB. Involved in the maturation of IscU. This chain is Chaperone protein HscA, found in Salmonella newport (strain SL254).